Here is a 229-residue protein sequence, read N- to C-terminus: uncharacterized protein (229 aa).

This is an uncharacterized protein from Ureaplasma parvum serovar 3 (strain ATCC 700970).